Reading from the N-terminus, the 168-residue chain is MSVMASDKACAPVRASRPFPKQKLRELVLQALYALEIDPEGEDSLVSLLMTEASVSKKNAAYALMFCRAIRANQPDLDALLDATIRTTTLARLTIIERNILRMMLFEHQQNQDCCPVPVAVLIAETTRLIKKFSYSEGSSLILAVLGSIFDHPAPALDTPLEPTSMCG.

The protein belongs to the NusB family.

Involved in transcription antitermination. Required for transcription of ribosomal RNA (rRNA) genes. Binds specifically to the boxA antiterminator sequence of the ribosomal RNA (rrn) operons. The polypeptide is Transcription antitermination protein NusB (Chlamydia trachomatis serovar L2 (strain ATCC VR-902B / DSM 19102 / 434/Bu)).